A 331-amino-acid chain; its full sequence is Glyceraldehyde-3-phosphate dehydrogenase (331 aa).

NAD(+) contacts are provided by residues 10-11 (RI), Asp31, Lys75, and Thr117. Residues 148–150 (SCT) and Thr179 contribute to the D-glyceraldehyde 3-phosphate site. Cys149 (nucleophile) is an active-site residue. Asn180 is an NAD(+) binding site. Residues Arg194, 207–208 (TG), and Arg230 contribute to the D-glyceraldehyde 3-phosphate site. Asn311 contributes to the NAD(+) binding site.

Belongs to the glyceraldehyde-3-phosphate dehydrogenase family. As to quaternary structure, homotetramer.

The protein resides in the cytoplasm. It carries out the reaction D-glyceraldehyde 3-phosphate + phosphate + NAD(+) = (2R)-3-phospho-glyceroyl phosphate + NADH + H(+). It functions in the pathway carbohydrate degradation; glycolysis; pyruvate from D-glyceraldehyde 3-phosphate: step 1/5. In terms of biological role, catalyzes the oxidative phosphorylation of glyceraldehyde 3-phosphate (G3P) to 1,3-bisphosphoglycerate (BPG) using the cofactor NAD. The first reaction step involves the formation of a hemiacetal intermediate between G3P and a cysteine residue, and this hemiacetal intermediate is then oxidized to a thioester, with concomitant reduction of NAD to NADH. The reduced NADH is then exchanged with the second NAD, and the thioester is attacked by a nucleophilic inorganic phosphate to produce BPG. This chain is Glyceraldehyde-3-phosphate dehydrogenase (gap), found in Thermus aquaticus.